A 368-amino-acid polypeptide reads, in one-letter code: MFRQSIVKQSCRFLATKKQPSIGRYTGKPNPKTGKYTVSFIEGDGVGPEISKSVKAIFSAAKVPIEWESCDVSPIFVNGLTTIPDPAVASINKNLIALKGPLATPIGKGHRSLNLTLRKTFGLFANVRPAKSIEGYKTTYENVNLVLIRENTEGEYSGIEHVVAPGVVQSIKLITQDASERVIRYAFEYARAVDRSKVLVVHKSTIQRLADGLFVDVAKKLSSEYPDIELQTELLDNTVLKTVQHPEAYDDVVVVCPNLYGDILSDLNSGLSAGSLGLTPSANIGHTVSIFEAVHGSAPDIAGQNKANPTALLLSSVMMLNHMGLTEHADKIEKAVLTTIASDAKNRTGDLGGSASTSSFTDAVIERL.

A mitochondrion-targeting transit peptide spans Met-1–Leu-14. Substrate is bound by residues Arg-118, Arg-128, Arg-149, and Asp-236. Positions 236, 262, and 266 each coordinate Mg(2+).

Belongs to the isocitrate and isopropylmalate dehydrogenases family. In terms of assembly, octamer of two non-identical subunits IDH1 and IDH2. It depends on Mg(2+) as a cofactor. The cofactor is Mn(2+).

It localises to the mitochondrion. The catalysed reaction is D-threo-isocitrate + NAD(+) = 2-oxoglutarate + CO2 + NADH. Its function is as follows. Performs an essential role in the oxidative function of the citric acid cycle. This Kluyveromyces lactis (strain ATCC 8585 / CBS 2359 / DSM 70799 / NBRC 1267 / NRRL Y-1140 / WM37) (Yeast) protein is Isocitrate dehydrogenase [NAD] subunit 2, mitochondrial (IDH2).